Consider the following 134-residue polypeptide: Small ribosomal subunit protein uS9 (134 aa).

The disordered stretch occupies residues 114-134 (EVERKKYGLKKARRAPQFSKR). The segment covering 120-134 (YGLKKARRAPQFSKR) has biased composition (basic residues).

The protein belongs to the universal ribosomal protein uS9 family.

The protein is Small ribosomal subunit protein uS9 of Thermotoga sp. (strain RQ2).